The primary structure comprises 195 residues: Cytochrome c oxidase assembly protein CtaG (195 aa).

The Cytoplasmic segment spans residues 1 to 7; that stretch reads MSGGKPR. The chain crosses the membrane as a helical; Signal-anchor for type II membrane protein span at residues 8-30; the sequence is SNTRTVAMLAGVVVLMGALSWAA. At 31 to 195 the chain is on the periplasmic side; the sequence is VPFYSWFCKV…LDAKTEPTVN (165 aa).

Belongs to the COX11/CtaG family.

Its subcellular location is the cell inner membrane. In terms of biological role, exerts its effect at some terminal stage of cytochrome c oxidase synthesis, probably by being involved in the insertion of the copper B into subunit I. The protein is Cytochrome c oxidase assembly protein CtaG of Paracoccus denitrificans (strain Pd 1222).